We begin with the raw amino-acid sequence, 346 residues long: Histidinol-phosphate aminotransferase (346 aa).

An N6-(pyridoxal phosphate)lysine modification is found at Lys-209.

It belongs to the class-II pyridoxal-phosphate-dependent aminotransferase family. Histidinol-phosphate aminotransferase subfamily. In terms of assembly, homodimer. Pyridoxal 5'-phosphate is required as a cofactor.

The enzyme catalyses L-histidinol phosphate + 2-oxoglutarate = 3-(imidazol-4-yl)-2-oxopropyl phosphate + L-glutamate. It functions in the pathway amino-acid biosynthesis; L-histidine biosynthesis; L-histidine from 5-phospho-alpha-D-ribose 1-diphosphate: step 7/9. In Aliivibrio fischeri (strain ATCC 700601 / ES114) (Vibrio fischeri), this protein is Histidinol-phosphate aminotransferase.